Reading from the N-terminus, the 153-residue chain is Prefoldin subunit alpha (153 aa).

Residues 126–153 form a disordered region; that stretch reads KRLEQGYRQAPGGSPVPHRHDHEDHDEE. The segment covering 143 to 153 has biased composition (basic and acidic residues); it reads HRHDHEDHDEE.

Belongs to the prefoldin alpha subunit family. In terms of assembly, heterohexamer of two alpha and four beta subunits.

It localises to the cytoplasm. Functionally, molecular chaperone capable of stabilizing a range of proteins. Seems to fulfill an ATP-independent, HSP70-like function in archaeal de novo protein folding. The sequence is that of Prefoldin subunit alpha from Methanoregula boonei (strain DSM 21154 / JCM 14090 / 6A8).